We begin with the raw amino-acid sequence, 240 residues long: Large ribosomal subunit protein bL25 (240 aa).

Disordered regions lie at residues 1 to 20 (MAENVLSAQKRTEQGKGPAR) and 204 to 240 (GAAPAAGAAAPAGGAAPAAGAAPAKGGEAKGGDKAKK). The span at 204–229 (GAAPAAGAAAPAGGAAPAAGAAPAKG) shows a compositional bias: low complexity. Positions 230-240 (GEAKGGDKAKK) are enriched in basic and acidic residues.

It belongs to the bacterial ribosomal protein bL25 family. CTC subfamily. Part of the 50S ribosomal subunit; part of the 5S rRNA/L5/L18/L25 subcomplex. Contacts the 5S rRNA. Binds to the 5S rRNA independently of L5 and L18.

Functionally, this is one of the proteins that binds to the 5S RNA in the ribosome where it forms part of the central protuberance. The chain is Large ribosomal subunit protein bL25 from Anaeromyxobacter sp. (strain K).